Consider the following 105-residue polypeptide: MRRNHGRGKKNRGSAGSIQCDKCGSVTPKDKAIKRFRIQSLIEQASFDDLKQATIYDVFEVPRMGYKSQFCVSCACHAKIVRVRSSQARKIRYGFNPNRVASAHN.

This sequence belongs to the eukaryotic ribosomal protein eS26 family. In terms of assembly, component of the small ribosomal subunit.

The protein localises to the cytoplasm. This Encephalitozoon cuniculi (strain GB-M1) (Microsporidian parasite) protein is Small ribosomal subunit protein eS26 (RPS26).